A 159-amino-acid polypeptide reads, in one-letter code: Phosphopantetheine adenylyltransferase (159 aa).

Thr-10 is a binding site for substrate. ATP-binding positions include 10–11 (TF) and His-18. Substrate contacts are provided by Lys-42, Met-74, and Arg-88. ATP is bound by residues 89–91 (GLR), Glu-99, and 124–130 (WSFISSS).

The protein belongs to the bacterial CoaD family. As to quaternary structure, homohexamer. It depends on Mg(2+) as a cofactor.

It is found in the cytoplasm. It catalyses the reaction (R)-4'-phosphopantetheine + ATP + H(+) = 3'-dephospho-CoA + diphosphate. The protein operates within cofactor biosynthesis; coenzyme A biosynthesis; CoA from (R)-pantothenate: step 4/5. Reversibly transfers an adenylyl group from ATP to 4'-phosphopantetheine, yielding dephospho-CoA (dPCoA) and pyrophosphate. In Pectobacterium carotovorum subsp. carotovorum (strain PC1), this protein is Phosphopantetheine adenylyltransferase.